The primary structure comprises 67 residues: uncharacterized protein (67 aa).

A helical membrane pass occupies residues tyrosine 12–alanine 34.

The protein localises to the membrane. This is an uncharacterized protein from Saccharomyces cerevisiae (strain ATCC 204508 / S288c) (Baker's yeast).